The primary structure comprises 768 residues: Ral guanine nucleotide dissociation stimulator-like 1 (768 aa).

Residues 65–196 (KIRTIKAGTL…RAQNLLEQFQ (132 aa)) enclose the N-terminal Ras-GEF domain. In terms of domain architecture, Ras-GEF spans 232–501 (SEDLVAEQLT…YALSCEIEAA (270 aa)). The residue at position 520 (S520) is a Phosphoserine. The interval 528–623 (MITSPTPTKE…PPSCNNNPKI (96 aa)) is disordered. Composition is skewed to low complexity over residues 541–561 (STAS…SCES), 586–596 (ESSSSCSSIHS), and 605–621 (SSLI…NNNP). A Ras-associating domain is found at 648 to 735 (DTCIIRISVE…FDFILRKKNS (88 aa)).

Interacts with Ras. Expressed in a wide variety of tissues with strong expression being seen in the heart, brain, kidney, spleen and testis.

Functionally, probable guanine nucleotide exchange factor. The protein is Ral guanine nucleotide dissociation stimulator-like 1 (RGL1) of Homo sapiens (Human).